A 343-amino-acid polypeptide reads, in one-letter code: Heat-inducible transcription repressor HrcA (343 aa).

This sequence belongs to the HrcA family.

In terms of biological role, negative regulator of class I heat shock genes (grpE-dnaK-dnaJ and groELS operons). Prevents heat-shock induction of these operons. In Bacillus pumilus (strain SAFR-032), this protein is Heat-inducible transcription repressor HrcA.